Consider the following 487-residue polypeptide: Virulence sensor histidine kinase PhoQ (487 aa).

Residues 1 to 16 (MNKFARHFLPLSLRVR) lie on the Cytoplasmic side of the membrane. A helical transmembrane segment spans residues 17-37 (FLLATAGVVLVLSLAYGIVAL). The Periplasmic portion of the chain corresponds to 38–193 (VGYSVSFDKT…ELKRSYMVWS (156 aa)). A divalent metal cation contacts are provided by Asp151 and Asp152. The chain crosses the membrane as a helical span at residues 194-214 (WFVYVLAANLLLVIPLLWIAA). One can recognise an HAMP domain in the interval 215–266 (WWSLRPIEALAREVRELEDHHREMLNPETTRELTSLVRNLNQLLKSERERYN). Residues 215-487 (WWSLRPIEAL…GRQHPTQKEE (273 aa)) are Cytoplasmic-facing. Positions 274 to 481 (DLTHSLKTPL…RMEVVFGRQH (208 aa)) constitute a Histidine kinase domain. His277 bears the Phosphohistidine; by autocatalysis mark. Asn386 provides a ligand contact to Mg(2+). ATP contacts are provided by residues 386–394 (NVLDNACKY), 416–421 (DDGPGI), and 435–447 (RADT…GVGL). Residue Gln443 coordinates Mg(2+).

As to quaternary structure, homodimer.

It is found in the cell inner membrane. It carries out the reaction ATP + protein L-histidine = ADP + protein N-phospho-L-histidine.. Functionally, member of the two-component regulatory system PhoP/PhoQ which regulates the expression of genes involved in virulence and resistance to host defense antimicrobial peptides. In low periplasmic Mg(2+), PhoQ functions as a membrane-associated protein kinase that undergoes autophosphorylation and subsequently transfers the phosphate to PhoP, which results in the expression of PhoP-activated genes (PAG) and repression of PhoP-repressed genes (PRG). In high periplasmic Mg(2+), acts as a protein phosphatase that dephosphorylates phospho-PhoP, which results in the repression of PAG and may lead to expression of some PRG. Promotes intramacrophage survival of S.typhi. Is required to enhance bacterial resistance to bile in the human intestinal cells. In Salmonella typhi, this protein is Virulence sensor histidine kinase PhoQ (phoQ).